A 316-amino-acid polypeptide reads, in one-letter code: Acetyl-coenzyme A carboxylase carboxyl transferase subunit beta (316 aa).

One can recognise a CoA carboxyltransferase N-terminal domain in the interval 39–308 (LWHKCSKCGV…PPHMVLWETM (270 aa)). Zn(2+)-binding residues include Cys43, Cys46, Cys62, and Cys65. The C4-type zinc-finger motif lies at 43–65 (CSKCGVLAYTKDLKANQMVCIEC).

Belongs to the AccD/PCCB family. In terms of assembly, acetyl-CoA carboxylase is a heterohexamer composed of biotin carboxyl carrier protein (AccB), biotin carboxylase (AccC) and two subunits each of ACCase subunit alpha (AccA) and ACCase subunit beta (AccD). Zn(2+) is required as a cofactor.

The protein resides in the cytoplasm. It catalyses the reaction N(6)-carboxybiotinyl-L-lysyl-[protein] + acetyl-CoA = N(6)-biotinyl-L-lysyl-[protein] + malonyl-CoA. The protein operates within lipid metabolism; malonyl-CoA biosynthesis; malonyl-CoA from acetyl-CoA: step 1/1. In terms of biological role, component of the acetyl coenzyme A carboxylase (ACC) complex. Biotin carboxylase (BC) catalyzes the carboxylation of biotin on its carrier protein (BCCP) and then the CO(2) group is transferred by the transcarboxylase to acetyl-CoA to form malonyl-CoA. The protein is Acetyl-coenzyme A carboxylase carboxyl transferase subunit beta of Nostoc punctiforme (strain ATCC 29133 / PCC 73102).